Consider the following 153-residue polypeptide: 3-hydroxyacyl-[acyl-carrier-protein] dehydratase FabZ (153 aa).

H58 is a catalytic residue.

The protein belongs to the thioester dehydratase family. FabZ subfamily.

Its subcellular location is the cytoplasm. The enzyme catalyses a (3R)-hydroxyacyl-[ACP] = a (2E)-enoyl-[ACP] + H2O. Its function is as follows. Involved in unsaturated fatty acids biosynthesis. Catalyzes the dehydration of short chain beta-hydroxyacyl-ACPs and long chain saturated and unsaturated beta-hydroxyacyl-ACPs. The protein is 3-hydroxyacyl-[acyl-carrier-protein] dehydratase FabZ of Bradyrhizobium diazoefficiens (strain JCM 10833 / BCRC 13528 / IAM 13628 / NBRC 14792 / USDA 110).